A 300-amino-acid chain; its full sequence is Bifunctional protein FolD (300 aa).

NADP(+) is bound by residues 169–171 (GHS) and isoleucine 235.

Belongs to the tetrahydrofolate dehydrogenase/cyclohydrolase family. As to quaternary structure, homodimer.

The catalysed reaction is (6R)-5,10-methylene-5,6,7,8-tetrahydrofolate + NADP(+) = (6R)-5,10-methenyltetrahydrofolate + NADPH. The enzyme catalyses (6R)-5,10-methenyltetrahydrofolate + H2O = (6R)-10-formyltetrahydrofolate + H(+). It functions in the pathway one-carbon metabolism; tetrahydrofolate interconversion. In terms of biological role, catalyzes the oxidation of 5,10-methylenetetrahydrofolate to 5,10-methenyltetrahydrofolate and then the hydrolysis of 5,10-methenyltetrahydrofolate to 10-formyltetrahydrofolate. The sequence is that of Bifunctional protein FolD from Rhodobacter capsulatus (strain ATCC BAA-309 / NBRC 16581 / SB1003).